Consider the following 165-residue polypeptide: RxLR effector protein PITG_09218 (165 aa).

An N-terminal signal peptide occupies residues 1-24 (MRFSAFLTLLLVAFVASCSTFASA). A RxLR-dEER motif is present at residues 31-57 (RRLRADAAPVPVNKDNVAKLAGGFLEK). A helical membrane pass occupies residues 129–149 (VTLGATVAGFAIYGAYKALFD).

Belongs to the RxLR effector family.

It is found in the secreted. The protein localises to the host mitochondrion membrane. It localises to the host endoplasmic reticulum membrane. Effector that enhances P.infestans colonization of Nicotiana benthamiana leaves. This chain is RxLR effector protein PITG_09218, found in Phytophthora infestans (strain T30-4) (Potato late blight agent).